A 261-amino-acid chain; its full sequence is Zinc finger protein 664 (261 aa).

C2H2-type zinc fingers lie at residues 3 to 25 (YKCP…QKIH), 31 to 53 (HKCD…WRDH), 59 to 81 (YKCD…KKIH), 87 to 109 (YKCY…MRVH), 115 to 137 (YVCS…QRVH), 143 to 165 (FKCE…QRVH), 171 to 193 (YKCY…QRVH), 199 to 221 (YRCC…QRVH), and 227 to 249 (FKCD…QRVH). K257 participates in a covalent cross-link: Glycyl lysine isopeptide (Lys-Gly) (interchain with G-Cter in SUMO2).

Belongs to the krueppel C2H2-type zinc-finger protein family.

It is found in the nucleus. Its function is as follows. May be involved in transcriptional regulation. The protein is Zinc finger protein 664 (ZNF664) of Pongo abelii (Sumatran orangutan).